Consider the following 274-residue polypeptide: tRNA-cytidine(32) 2-sulfurtransferase (274 aa).

The PP-loop motif motif lies at 40 to 45 (SGGKDS). The [4Fe-4S] cluster site is built by C115, C118, and C206.

This sequence belongs to the TtcA family. Homodimer. Mg(2+) is required as a cofactor. [4Fe-4S] cluster serves as cofactor.

The protein localises to the cytoplasm. It carries out the reaction cytidine(32) in tRNA + S-sulfanyl-L-cysteinyl-[cysteine desulfurase] + AH2 + ATP = 2-thiocytidine(32) in tRNA + L-cysteinyl-[cysteine desulfurase] + A + AMP + diphosphate + H(+). It participates in tRNA modification. Its function is as follows. Catalyzes the ATP-dependent 2-thiolation of cytidine in position 32 of tRNA, to form 2-thiocytidine (s(2)C32). The sulfur atoms are provided by the cysteine/cysteine desulfurase (IscS) system. The polypeptide is tRNA-cytidine(32) 2-sulfurtransferase (Pseudomonas fluorescens (strain ATCC BAA-477 / NRRL B-23932 / Pf-5)).